The primary structure comprises 379 residues: Heme chaperone HemW (379 aa).

Residues 1–233 form the Radical SAM core domain; it reads MKSAYIHIPF…MSKMEAHGIH (233 aa). Tyrosine 5 is a binding site for S-adenosyl-L-methionine. Residues cysteine 11, cysteine 15, and cysteine 18 each coordinate [4Fe-4S] cluster. S-adenosyl-L-methionine contacts are provided by residues glycine 60, 61 to 62, glutamate 94, glutamine 121, arginine 133, and aspartate 158; that span reads GT.

Belongs to the anaerobic coproporphyrinogen-III oxidase family. HemW subfamily. The cofactor is [4Fe-4S] cluster.

It localises to the cytoplasm. Functionally, probably acts as a heme chaperone, transferring heme to an unknown acceptor. Binds one molecule of heme per monomer, possibly covalently. Binds 1 [4Fe-4S] cluster. The cluster is coordinated with 3 cysteines and an exchangeable S-adenosyl-L-methionine. The chain is Heme chaperone HemW from Bacillus subtilis (strain 168).